A 254-amino-acid polypeptide reads, in one-letter code: Imidazole glycerol phosphate synthase subunit HisF (254 aa).

Catalysis depends on residues Asp14 and Asp133.

This sequence belongs to the HisA/HisF family. In terms of assembly, heterodimer of HisH and HisF.

It localises to the cytoplasm. It catalyses the reaction 5-[(5-phospho-1-deoxy-D-ribulos-1-ylimino)methylamino]-1-(5-phospho-beta-D-ribosyl)imidazole-4-carboxamide + L-glutamine = D-erythro-1-(imidazol-4-yl)glycerol 3-phosphate + 5-amino-1-(5-phospho-beta-D-ribosyl)imidazole-4-carboxamide + L-glutamate + H(+). The protein operates within amino-acid biosynthesis; L-histidine biosynthesis; L-histidine from 5-phospho-alpha-D-ribose 1-diphosphate: step 5/9. IGPS catalyzes the conversion of PRFAR and glutamine to IGP, AICAR and glutamate. The HisF subunit catalyzes the cyclization activity that produces IGP and AICAR from PRFAR using the ammonia provided by the HisH subunit. This chain is Imidazole glycerol phosphate synthase subunit HisF, found in Nitratiruptor sp. (strain SB155-2).